A 340-amino-acid chain; its full sequence is tRNA N6-adenosine threonylcarbamoyltransferase (340 aa).

2 residues coordinate Fe cation: His-113 and His-117. Residues Leu-135–Gly-139, Asp-169, Gly-182, Asp-186, and Asn-274 contribute to the substrate site. Asp-302 is a Fe cation binding site.

It belongs to the KAE1 / TsaD family. Fe(2+) is required as a cofactor.

It localises to the cytoplasm. The catalysed reaction is L-threonylcarbamoyladenylate + adenosine(37) in tRNA = N(6)-L-threonylcarbamoyladenosine(37) in tRNA + AMP + H(+). Its function is as follows. Required for the formation of a threonylcarbamoyl group on adenosine at position 37 (t(6)A37) in tRNAs that read codons beginning with adenine. Is involved in the transfer of the threonylcarbamoyl moiety of threonylcarbamoyl-AMP (TC-AMP) to the N6 group of A37, together with TsaE and TsaB. TsaD likely plays a direct catalytic role in this reaction. The polypeptide is tRNA N6-adenosine threonylcarbamoyltransferase (Mycolicibacterium smegmatis (strain ATCC 700084 / mc(2)155) (Mycobacterium smegmatis)).